The sequence spans 176 residues: Large ribosomal subunit protein uL10 (176 aa).

This sequence belongs to the universal ribosomal protein uL10 family. In terms of assembly, part of the ribosomal stalk of the 50S ribosomal subunit. The N-terminus interacts with L11 and the large rRNA to form the base of the stalk. The C-terminus forms an elongated spine to which L12 dimers bind in a sequential fashion forming a multimeric L10(L12)X complex.

Forms part of the ribosomal stalk, playing a central role in the interaction of the ribosome with GTP-bound translation factors. This chain is Large ribosomal subunit protein uL10, found in Dehalococcoides mccartyi (strain ATCC BAA-2100 / JCM 16839 / KCTC 5957 / BAV1).